Reading from the N-terminus, the 101-residue chain is Gamma-secretase subunit PEN-2 (101 aa).

Residues Met-1–Lys-17 lie on the Cytoplasmic side of the membrane. An intramembrane region (helical) is located at residues Tyr-18–Trp-36. Residues Phe-37–Val-57 are Cytoplasmic-facing. A helical transmembrane segment spans residues Trp-58–Phe-78. Over Gln-79–Pro-101 the chain is Lumenal.

This sequence belongs to the PEN-2 family. In terms of assembly, the functional gamma-secretase complex is composed of at least four polypeptides: a presenilin homodimer (PSEN1 or PSEN2), nicastrin (NCSTN), APH1 (APH1A or APH1B) and PSENEN.

The protein localises to the endoplasmic reticulum membrane. Its subcellular location is the golgi apparatus. The protein resides in the golgi stack membrane. It is found in the cell membrane. It localises to the membrane. In terms of biological role, essential subunit of the gamma-secretase complex, an endoprotease complex that catalyzes the intramembrane cleavage of integral membrane proteins such as Notch receptors and APP (amyloid-beta precursor protein). The gamma-secretase complex plays a role in Notch and Wnt signaling cascades and regulation of downstream processes via its role in processing key regulatory proteins, and by regulating cytosolic CTNNB1 levels. PSENEN modulates both endoproteolysis of presenilin and gamma-secretase activity. The sequence is that of Gamma-secretase subunit PEN-2 (PSENEN) from Bos taurus (Bovine).